The sequence spans 1105 residues: DNA polymerase delta catalytic subunit (1105 aa).

Residues 1–46 are disordered; that stretch reads MSSGGRGGKRRGAPPPGPSGAAAKRAHPGGTPQPPPPAATAAAPVA. Zn(2+) is bound by residues Cys1015, Cys1018, Cys1030, and Cys1033. The CysA-type zinc finger occupies 1015-1033; the sequence is CLGCKAVISGSNQTLCFHC. Positions 1062, 1065, 1075, and 1080 each coordinate [4Fe-4S] cluster. The CysB motif motif lies at 1062-1080; that stretch reads CQECQGSLHQDVLCTSRDC.

Belongs to the DNA polymerase type-B family. As to quaternary structure, heterodimer with subunits of 125 kDa and 50 kDa. The 125 kDa subunit contains the polymerase active site and most likely the active site for the 3'-5' exonuclease activity. It depends on [4Fe-4S] cluster as a cofactor.

It is found in the nucleus. It catalyses the reaction DNA(n) + a 2'-deoxyribonucleoside 5'-triphosphate = DNA(n+1) + diphosphate. In terms of biological role, this polymerase possesses two enzymatic activities: DNA synthesis (polymerase) and an exonucleolytic activity that degrades single-stranded DNA in the 3'- to 5'-direction. This chain is DNA polymerase delta catalytic subunit (POLD1), found in Oryza sativa subsp. japonica (Rice).